The following is a 111-amino-acid chain: Transcription factor S (111 aa).

8 residues coordinate Zn(2+): Cys-4, Cys-7, Cys-24, Cys-27, Cys-72, Cys-75, Cys-100, and Cys-103. Residues 4–27 form a C4-type zinc finger; sequence CPKCGSMMMPRKENGKTVYKCSKC. The TFIIS-type zinc finger occupies 68–108; sequence RGISCPSCGNDEAYFWILQTRSADEPATRFYKCTKCGKVWR.

It belongs to the archaeal RpoM/eukaryotic RPA12/RPB9/RPC11 RNA polymerase family.

Induces RNA cleavage activity in the RNA polymerase. In its presence, the cleavage activity of the RNA polymerase truncates the RNA back to position +15 in a stepwise manner by releasing mainly dinucleotides from the 3'-end of the nascent RNA. The truncated RNAs are able to continue elongation. Involved in transcriptional proofreading and fidelity. Misincorporation of nucleotides during elongation of transcription leads to arrested elongation complexes which are rescued by TFS-promoted removal of a dinucleotide from the 3'-end. TFS is able to induce a cleavage resynthesis cycle in stalled elongation complexes (resulting from the next missing nucleotide or a reduced incorporation rate of a wrong nucleotide) preventing misincorporation and enabling proofreading in a post-incorporation manner. Pausing of elongation complexes is the main determinant of TFS-induced RNA cleavage. In Sulfolobus acidocaldarius (strain ATCC 33909 / DSM 639 / JCM 8929 / NBRC 15157 / NCIMB 11770), this protein is Transcription factor S.